Consider the following 674-residue polypeptide: Methionine--tRNA ligase (674 aa).

Positions 11–21 (PYANGDLHLGH) match the 'HIGH' region motif. The Zn(2+) site is built by Cys142, Cys145, Cys155, and Cys158. The 'KMSKS' region signature appears at 330-334 (KMSKS). Lys333 is an ATP binding site. In terms of domain architecture, tRNA-binding spans 574-674 (DFMKVDLRIA…EGAQPGMRVK (101 aa)).

This sequence belongs to the class-I aminoacyl-tRNA synthetase family. MetG type 1 subfamily. Homodimer. The cofactor is Zn(2+).

It localises to the cytoplasm. It catalyses the reaction tRNA(Met) + L-methionine + ATP = L-methionyl-tRNA(Met) + AMP + diphosphate. Its function is as follows. Is required not only for elongation of protein synthesis but also for the initiation of all mRNA translation through initiator tRNA(fMet) aminoacylation. This chain is Methionine--tRNA ligase, found in Francisella tularensis subsp. holarctica (strain FTNF002-00 / FTA).